Reading from the N-terminus, the 207-residue chain is Sodium/potassium-transporting ATPase subunit beta-1-interacting protein 1 (207 aa).

An N-terminal signal peptide occupies residues 1 to 21 (MGKCSGRCTLVAFCCLQLVAA). The Extracellular portion of the chain corresponds to 22–34 (LERQIFDFLGYQW). A helical membrane pass occupies residues 35–55 (APILANFLHIMAVILGIFGTV). The Cytoplasmic segment spans residues 56–61 (QYRSRY). Residues 62-82 (LILYAAWLVLWVGWNAFIICF) traverse the membrane as a helical segment. The Extracellular segment spans residues 83–146 (YLEVGQLSQD…GCLLDYPYIE (64 aa)). The N-linked (GlcNAc...) asparagine glycan is linked to asparagine 100. Residues 147 to 167 (ALSSALQIFLALFGFVFACYV) form a helical membrane-spanning segment. Residues 168-207 (SKVFLEEEDSFDFIGGFDSYGYQAPQKTSHLQLQPLYTSG) are Cytoplasmic-facing.

It belongs to the NKAIN family. As to quaternary structure, interacts with ATP1B1 C-terminus.

It is found in the cell membrane. The chain is Sodium/potassium-transporting ATPase subunit beta-1-interacting protein 1 (NKAIN1) from Homo sapiens (Human).